A 38-amino-acid chain; its full sequence is Large ribosomal subunit protein bL36 (38 aa).

The protein belongs to the bacterial ribosomal protein bL36 family.

The polypeptide is Large ribosomal subunit protein bL36 (Aster yellows witches'-broom phytoplasma (strain AYWB)).